A 1753-amino-acid polypeptide reads, in one-letter code: Negative regulator of sporulation PMD1 (1753 aa).

2 Kelch repeats span residues 143–198 and 206–253; these read NIYI…VLNE and KLII…KILV. T298 bears the Phosphothreonine mark. Residues 651–664 are compositionally biased toward polar residues; it reads TTKFGNSSQSSNGS. Disordered regions lie at residues 651-753 and 771-807; these read TTKF…TTCS and LGLSEQSGRSTRASSVSPPPVYKKSTNDGNDSNCTLS. A compositionally biased stretch (low complexity) spans 670-683; it reads SKNGNSKSNSNTSL. Composition is skewed to polar residues over residues 690–699, 740–753, 774–783, and 797–807; these read DFTSSTSSPK, TGTSNKRPISTTCS, SEQSGRSTRA, and NDGNDSNCTLS. S838 carries the phosphoserine modification. Disordered stretches follow at residues 875–915, 938–957, and 962–988; these read IASP…LGSS, PLEPLPPVPKAPSRRSSSLA, and FGRDSPVASRRSSHSTRKSSSSDARRI. Positions 880–900 are enriched in low complexity; that stretch reads QSRQTSFASTASTASVVSSTS. Residues 938–947 show a composition bias toward pro residues; it reads PLEPLPPVPK. Residues 979 to 988 show a composition bias toward low complexity; the sequence is KSSSSDARRI. Phosphoserine is present on residues S1289, S1307, and S1356. Disordered stretches follow at residues 1312 to 1467, 1604 to 1686, and 1706 to 1753; these read SPAT…DLDS, PIFA…NKRF, and SAVN…GKRR. Positions 1344 to 1379 are enriched in polar residues; the sequence is VSRQQNFPRRSSSFTETVPTEPTRYNYQNLDSSKSN. Positions 1399 to 1430 are enriched in basic and acidic residues; sequence NFDKYKVETLQKRNSNDGKDLDRTNDPLKNRG. Residues 1653-1677 are compositionally biased toward polar residues; the sequence is IKFSQAPSTQISPRTSVTDFTASQQ. S1664 bears the Phosphoserine mark. Over residues 1711–1723 the composition is skewed to basic and acidic residues; the sequence is GRKESEGHCEDRS.

It is found in the cytoplasm. In terms of biological role, negatively regulates early sporulation-specific genes. Seems to exert its function by positively regulating the Ras/cAMP pathway. Required for growth under alkaline conditions. Acts synergetically with MDS3. The sequence is that of Negative regulator of sporulation PMD1 (PMD1) from Saccharomyces cerevisiae (strain ATCC 204508 / S288c) (Baker's yeast).